The sequence spans 332 residues: L-lactate dehydrogenase A chain (332 aa).

N-acetylalanine is present on Ala-2. Position 5 is an N6-acetyllysine; alternate (Lys-5). An N6-succinyllysine; alternate modification is found at Lys-5. At Lys-14 the chain carries N6-acetyllysine. Thr-18 bears the Phosphothreonine mark. 29–57 is an NAD(+) binding site; that stretch reads GAVGMACAISILMKDLADELALVDVIEDK. Lys-57 bears the N6-acetyllysine; alternate mark. Residue Lys-57 forms a Glycyl lysine isopeptide (Lys-Gly) (interchain with G-Cter in SUMO2); alternate linkage. Position 81 is an N6-acetyllysine (Lys-81). Arg-99 contributes to the NAD(+) binding site. Substrate is bound at residue Arg-106. Lys-118 bears the N6-acetyllysine; alternate mark. Lys-118 carries the post-translational modification N6-succinyllysine; alternate. An N6-acetyllysine modification is found at Lys-126. Substrate-binding residues include Asn-138 and Arg-169. The active-site Proton acceptor is the His-193. 2 positions are modified to N6-acetyllysine: Lys-224 and Lys-232. Residue Tyr-239 is modified to Phosphotyrosine. An N6-acetyllysine modification is found at Lys-243. Substrate is bound at residue Thr-248. Thr-309 is subject to Phosphothreonine. The residue at position 310 (Ser-310) is a Phosphoserine. The residue at position 318 (Lys-318) is an N6-acetyllysine; alternate. Residue Lys-318 is modified to N6-succinyllysine; alternate. Phosphothreonine is present on Thr-322.

This sequence belongs to the LDH/MDH superfamily. LDH family. Homotetramer. Interacts with PTEN upstream reading frame protein MP31. Post-translationally, ISGylated.

The protein localises to the cytoplasm. It carries out the reaction (S)-lactate + NAD(+) = pyruvate + NADH + H(+). It participates in fermentation; pyruvate fermentation to lactate; (S)-lactate from pyruvate: step 1/1. Functionally, interconverts simultaneously and stereospecifically pyruvate and lactate with concomitant interconversion of NADH and NAD(+). This Pongo abelii (Sumatran orangutan) protein is L-lactate dehydrogenase A chain (LDHA).